The sequence spans 536 residues: Formate--tetrahydrofolate ligase (536 aa).

51-58 (TAAGEGKT) provides a ligand contact to ATP.

This sequence belongs to the formate--tetrahydrofolate ligase family.

It catalyses the reaction (6S)-5,6,7,8-tetrahydrofolate + formate + ATP = (6R)-10-formyltetrahydrofolate + ADP + phosphate. It functions in the pathway one-carbon metabolism; tetrahydrofolate interconversion. This chain is Formate--tetrahydrofolate ligase, found in Thermoplasma volcanium (strain ATCC 51530 / DSM 4299 / JCM 9571 / NBRC 15438 / GSS1).